A 297-amino-acid polypeptide reads, in one-letter code: 4-hydroxy-tetrahydrodipicolinate synthase (297 aa).

Thr47 lines the pyruvate pocket. Tyr135 serves as the catalytic Proton donor/acceptor. Residue Lys163 is the Schiff-base intermediate with substrate of the active site. Ile205 contributes to the pyruvate binding site.

The protein belongs to the DapA family. Homotetramer; dimer of dimers.

The protein localises to the cytoplasm. It catalyses the reaction L-aspartate 4-semialdehyde + pyruvate = (2S,4S)-4-hydroxy-2,3,4,5-tetrahydrodipicolinate + H2O + H(+). The protein operates within amino-acid biosynthesis; L-lysine biosynthesis via DAP pathway; (S)-tetrahydrodipicolinate from L-aspartate: step 3/4. Its function is as follows. Catalyzes the condensation of (S)-aspartate-beta-semialdehyde [(S)-ASA] and pyruvate to 4-hydroxy-tetrahydrodipicolinate (HTPA). This is 4-hydroxy-tetrahydrodipicolinate synthase from Dehalococcoides mccartyi (strain ATCC BAA-2266 / KCTC 15142 / 195) (Dehalococcoides ethenogenes (strain 195)).